The following is a 282-amino-acid chain: Ribosomal RNA small subunit methyltransferase I (282 aa).

This sequence belongs to the methyltransferase superfamily. RsmI family.

Its subcellular location is the cytoplasm. The catalysed reaction is cytidine(1402) in 16S rRNA + S-adenosyl-L-methionine = 2'-O-methylcytidine(1402) in 16S rRNA + S-adenosyl-L-homocysteine + H(+). In terms of biological role, catalyzes the 2'-O-methylation of the ribose of cytidine 1402 (C1402) in 16S rRNA. In Buchnera aphidicola subsp. Acyrthosiphon pisum (strain APS) (Acyrthosiphon pisum symbiotic bacterium), this protein is Ribosomal RNA small subunit methyltransferase I.